The chain runs to 305 residues: Glycine--tRNA ligase alpha subunit (305 aa).

The protein belongs to the class-II aminoacyl-tRNA synthetase family. As to quaternary structure, tetramer of two alpha and two beta subunits.

It is found in the cytoplasm. The catalysed reaction is tRNA(Gly) + glycine + ATP = glycyl-tRNA(Gly) + AMP + diphosphate. The polypeptide is Glycine--tRNA ligase alpha subunit (Ligilactobacillus salivarius (strain UCC118) (Lactobacillus salivarius)).